The sequence spans 106 residues: Nucleoid-associated protein BRADO0764 (106 aa).

Belongs to the YbaB/EbfC family. In terms of assembly, homodimer.

The protein resides in the cytoplasm. It localises to the nucleoid. In terms of biological role, binds to DNA and alters its conformation. May be involved in regulation of gene expression, nucleoid organization and DNA protection. This chain is Nucleoid-associated protein BRADO0764, found in Bradyrhizobium sp. (strain ORS 278).